The sequence spans 107 residues: Hydrogenase expression/formation protein HoxL (107 aa).

Belongs to the HupF/HypC family.

In Cupriavidus necator (strain ATCC 17699 / DSM 428 / KCTC 22496 / NCIMB 10442 / H16 / Stanier 337) (Ralstonia eutropha), this protein is Hydrogenase expression/formation protein HoxL (hoxL).